A 684-amino-acid chain; its full sequence is Pheromone-processing carboxypeptidase KEX1 (684 aa).

The signal sequence occupies residues 1 to 18 (MVIKYLLLILVQSFVAFA). Topologically, residues 19–556 (LPFTSRSDPK…NQQTSNRITR (538 aa)) are lumenal. N62 carries N-linked (GlcNAc...) asparagine glycosylation. Residues S181 and D388 contribute to the active site. 2 N-linked (GlcNAc...) asparagine glycosylation sites follow: N424 and N435. The active site involves H446. N-linked (GlcNAc...) asparagine glycosylation is present at N474. Positions 494-549 (KQKEESESKTSPTSVTQSKTSSISAVSGKSLATSTTLDQEHSATPSAEAERAKNQQ) are disordered. The span at 510-538 (QSKTSSISAVSGKSLATSTTLDQEHSATP) shows a compositional bias: polar residues. The helical transmembrane segment at 557-577 (LIQLLVIVVLIWGVYILYSSY) threads the bilayer. The Cytoplasmic portion of the chain corresponds to 578 to 684 (RSRPSSIIKT…NQTNKQSVSK (107 aa)). The segment at 647-684 (MNEGITEHTDNRVDDFIIESDEEDAHDENQTNKQSVSK) is disordered. The span at 651-661 (ITEHTDNRVDD) shows a compositional bias: basic and acidic residues. The segment covering 662-672 (FIIESDEEDAH) has biased composition (acidic residues).

The protein belongs to the peptidase S10 family.

The protein localises to the golgi apparatus. The protein resides in the trans-Golgi network membrane. It carries out the reaction Preferential release of a C-terminal arginine or lysine residue.. Functionally, protease with a carboxypeptidase B-like function involved in the C-terminal processing of the lysine and arginine residues from protein precursors. Promotes cell fusion and is involved in the programmed cell death. This chain is Pheromone-processing carboxypeptidase KEX1 (KEX1), found in Debaryomyces hansenii (strain ATCC 36239 / CBS 767 / BCRC 21394 / JCM 1990 / NBRC 0083 / IGC 2968) (Yeast).